The following is a 369-amino-acid chain: Phenylalanine--tRNA ligase alpha subunit (369 aa).

E269 is a Mg(2+) binding site.

This sequence belongs to the class-II aminoacyl-tRNA synthetase family. Phe-tRNA synthetase alpha subunit type 1 subfamily. Tetramer of two alpha and two beta subunits. Mg(2+) is required as a cofactor.

It is found in the cytoplasm. It carries out the reaction tRNA(Phe) + L-phenylalanine + ATP = L-phenylalanyl-tRNA(Phe) + AMP + diphosphate + H(+). In Brucella ovis (strain ATCC 25840 / 63/290 / NCTC 10512), this protein is Phenylalanine--tRNA ligase alpha subunit.